The sequence spans 252 residues: Small ribosomal subunit protein uS3 (252 aa).

The KH type-2 domain occupies 39–111; it reads IRKLINNFAK…DVNLNVLEVK (73 aa). The disordered stretch occupies residues 226-252; sequence SQSSNNPNRRPRNFKGGNNNHVNAKKN.

This sequence belongs to the universal ribosomal protein uS3 family. Part of the 30S ribosomal subunit. Forms a tight complex with proteins S10 and S14.

Functionally, binds the lower part of the 30S subunit head. Binds mRNA in the 70S ribosome, positioning it for translation. The protein is Small ribosomal subunit protein uS3 of Aster yellows witches'-broom phytoplasma (strain AYWB).